Reading from the N-terminus, the 81-residue chain is Sulfur carrier protein TusA (81 aa).

Cys-19 acts as the Cysteine persulfide intermediate in catalysis.

Belongs to the sulfur carrier protein TusA family.

The protein resides in the cytoplasm. Functionally, sulfur carrier protein which probably makes part of a sulfur-relay system. The chain is Sulfur carrier protein TusA from Shewanella baltica (strain OS223).